The following is a 443-amino-acid chain: Ribulose bisphosphate carboxylase large chain (443 aa).

Substrate contacts are provided by asparagine 89 and threonine 139. The active-site Proton acceptor is the lysine 141. Residue lysine 143 participates in substrate binding. Lysine 167, aspartate 169, and glutamate 170 together coordinate Mg(2+). Lysine 167 carries the post-translational modification N6-carboxylysine. Histidine 260 serves as the catalytic Proton acceptor. Substrate is bound by residues arginine 261, histidine 293, and serine 345.

Belongs to the RuBisCO large chain family. Type I subfamily. Heterohexadecamer of 8 large chains and 8 small chains; disulfide-linked. The disulfide link is formed within the large subunit homodimers. Mg(2+) serves as cofactor. The disulfide bond which can form in the large chain dimeric partners within the hexadecamer appears to be associated with oxidative stress and protein turnover.

Its subcellular location is the plastid. The protein resides in the chloroplast. The enzyme catalyses 2 (2R)-3-phosphoglycerate + 2 H(+) = D-ribulose 1,5-bisphosphate + CO2 + H2O. The catalysed reaction is D-ribulose 1,5-bisphosphate + O2 = 2-phosphoglycolate + (2R)-3-phosphoglycerate + 2 H(+). RuBisCO catalyzes two reactions: the carboxylation of D-ribulose 1,5-bisphosphate, the primary event in carbon dioxide fixation, as well as the oxidative fragmentation of the pentose substrate in the photorespiration process. Both reactions occur simultaneously and in competition at the same active site. In Sesamum indicum (Oriental sesame), this protein is Ribulose bisphosphate carboxylase large chain.